Consider the following 196-residue polypeptide: MTDDQILAEFRAADALLQGHFLLSSGRHSEYYLQCARVLMDTERAGRLAAALAAKLPRELKQAIDLVVSPAMGGVIIGHEMGRALGKPAIFVERPTGTFELRRGFTIDPGAKVLMVEDVVTTGLSSREAMEAVRAAGGEVVAEAALVDRSAGSNIDLGVPFYPLVAINFPTYAADELPPELAGTEAIKPGSRSVAA.

A 5-phospho-alpha-D-ribose 1-diphosphate-binding site is contributed by 117–125 (EDVVTTGLS). Residues T121 and R149 each coordinate orotate.

It belongs to the purine/pyrimidine phosphoribosyltransferase family. PyrE subfamily. As to quaternary structure, homodimer. The cofactor is Mg(2+).

The catalysed reaction is orotidine 5'-phosphate + diphosphate = orotate + 5-phospho-alpha-D-ribose 1-diphosphate. It functions in the pathway pyrimidine metabolism; UMP biosynthesis via de novo pathway; UMP from orotate: step 1/2. Catalyzes the transfer of a ribosyl phosphate group from 5-phosphoribose 1-diphosphate to orotate, leading to the formation of orotidine monophosphate (OMP). The sequence is that of Orotate phosphoribosyltransferase from Sphingopyxis alaskensis (strain DSM 13593 / LMG 18877 / RB2256) (Sphingomonas alaskensis).